The sequence spans 101 residues: Large ribosomal subunit protein eL21 (101 aa).

Residues 1-18 show a composition bias toward basic residues; that stretch reads MVKHSRGYRTRSRSLLRK. The disordered stretch occupies residues 1–23; the sequence is MVKHSRGYRTRSRSLLRKSPRER.

The protein belongs to the eukaryotic ribosomal protein eL21 family.

The chain is Large ribosomal subunit protein eL21 from Saccharolobus islandicus (strain Y.G.57.14 / Yellowstone #1) (Sulfolobus islandicus).